The primary structure comprises 111 residues: Large ribosomal subunit protein uL22 (111 aa).

The protein belongs to the universal ribosomal protein uL22 family. As to quaternary structure, part of the 50S ribosomal subunit.

This protein binds specifically to 23S rRNA; its binding is stimulated by other ribosomal proteins, e.g. L4, L17, and L20. It is important during the early stages of 50S assembly. It makes multiple contacts with different domains of the 23S rRNA in the assembled 50S subunit and ribosome. Its function is as follows. The globular domain of the protein is located near the polypeptide exit tunnel on the outside of the subunit, while an extended beta-hairpin is found that lines the wall of the exit tunnel in the center of the 70S ribosome. The sequence is that of Large ribosomal subunit protein uL22 from Pelobacter propionicus (strain DSM 2379 / NBRC 103807 / OttBd1).